We begin with the raw amino-acid sequence, 193 residues long: Putative kinase protein 029R (193 aa).

9 to 17 (GIIGSGKSS) serves as a coordination point for ATP. Glu31, Tyr43, and Gln54 together coordinate substrate. The Proton acceptor role is filled by Glu78. Substrate contacts are provided by Arg79 and Glu142.

Belongs to the DCK/DGK family.

The polypeptide is Putative kinase protein 029R (Aedes vexans (Inland floodwater mosquito)).